Reading from the N-terminus, the 378-residue chain is tRNA N(3)-cytidine methyltransferase METTL2 (378 aa).

S-adenosyl-L-methionine contacts are provided by Trp78, Tyr82, Gly188, Asp213, Asp239, Leu240, and Ile260.

Belongs to the methyltransferase superfamily. METL family. Monomer. Interacts with DALRD3.

It is found in the cytoplasm. It carries out the reaction cytidine(32) in tRNA(Thr) + S-adenosyl-L-methionine = N(3)-methylcytidine(32) in tRNA(Thr) + S-adenosyl-L-homocysteine + H(+). The enzyme catalyses cytidine(32) in tRNA(Arg)(CCU) + S-adenosyl-L-methionine = N(3)-methylcytidine(32) in tRNA(Arg)(CCU) + S-adenosyl-L-homocysteine + H(+). S-adenosyl-L-methionine-dependent methyltransferase that mediates N(3)-methylcytidine modification of residue 32 of the tRNA anticodon loop of tRNA(Thr)(UGU) and tRNA(Arg)(CCU). N(3)-methylcytidine methylation by METTL2 requires the N6-threonylcarbamoylation of tRNA (t6A37) by the EKC/KEOPS complex as prerequisite. The sequence is that of tRNA N(3)-cytidine methyltransferase METTL2 (METTL2) from Bos taurus (Bovine).